The primary structure comprises 961 residues: E4 ubiquitin-protein ligase UFD2 (961 aa).

The 75-residue stretch at 880 to 954 folds into the U-box domain; the sequence is DVPDEFLDPL…LCFKKQKKEE (75 aa).

Belongs to the ubiquitin conjugation factor E4 family. Interacts with CDC48. Interacts with the ubiquitin-like domain of RAD23 and DSK2. Interacts with PEX29.

Its subcellular location is the cytoplasm. It localises to the nucleus. It carries out the reaction S-ubiquitinyl-[E2 ubiquitin-conjugating enzyme]-L-cysteine + [acceptor protein]-L-lysine = [E2 ubiquitin-conjugating enzyme]-L-cysteine + N(6)-ubiquitinyl-[acceptor protein]-L-lysine.. It functions in the pathway protein modification; protein ubiquitination. Functionally, E4 ubiquitin chain-elongation enzyme specifically involved in polyubiquitin chain assembly. Binds to CDC48 and elongates mono- and diubiquitinated ERAD substrates presented by the UFD1-NPL4-CDC48/p97 (UNC) AAA ATPase complex to a chain length of 4 to 6 ubiquitin moieties. Delivers these polyubiquitinated substrates to RAD23 and DSK2, which target them to the proteasome. Has E3 ubiquitin-protein ligase activity, accepting ubiquitin from its cognate E2 ubiquitin-conjugating enzyme UBC4. Enhances ubiquitination at 'Lys-48', but not at 'Lys-29' of the Ub moiety. Promotes ubiquitin chain elongation at 'Lys-48' on the DOA10 substrate PEX29. Also involved in the proteolytic processing of the ER-bound transcription factor SPT23. The polypeptide is E4 ubiquitin-protein ligase UFD2 (UFD2) (Saccharomyces cerevisiae (strain ATCC 204508 / S288c) (Baker's yeast)).